Consider the following 561-residue polypeptide: Trehalose-6-phosphate hydrolase (561 aa).

Asp-203 serves as the catalytic Nucleophile. Glu-254 acts as the Proton donor in catalysis.

Belongs to the glycosyl hydrolase 13 family.

Its subcellular location is the cytoplasm. The enzyme catalyses alpha,alpha-trehalose 6-phosphate + H2O = D-glucose 6-phosphate + D-glucose. Its activity is regulated as follows. Activity is stimulated by high salt concentrations with different efficiencies depending on the kind of salt. In vitro, inhibited by glucose. Functionally, hydrolyzes trehalose-6-phosphate to glucose and glucose 6-phosphate. Can also very effectively hydrolyze p-nitrophenyl-alpha-D-glucopyranoside, but not lactose, maltose, sucrose or sucrose-6-phosphate. Trehalose is also hydrolyzed, but to a much smaller extent than trehalose-6-phosphate. This Bacillus subtilis (strain 168) protein is Trehalose-6-phosphate hydrolase.